A 231-amino-acid chain; its full sequence is Chromosome partition protein MukE (231 aa).

The interval 204–231 (TPEPSQQSLLENPTAEYDEEQTEWEDEA) is disordered. Over residues 219-231 (EYDEEQTEWEDEA) the composition is skewed to acidic residues.

It belongs to the MukE family. In terms of assembly, interacts, and probably forms a ternary complex, with MukF and MukB. The complex formation is stimulated by calcium or magnesium.

The protein resides in the cytoplasm. It is found in the nucleoid. In terms of biological role, involved in chromosome condensation, segregation and cell cycle progression. May participate in facilitating chromosome segregation by condensation DNA from both sides of a centrally located replisome during cell division. Probably acts via its interaction with MukB and MukF. This chain is Chromosome partition protein MukE, found in Vibrio cholerae serotype O1 (strain ATCC 39315 / El Tor Inaba N16961).